Here is a 94-residue protein sequence, read N- to C-terminus: Putative regulatory protein Sfum_3631 (94 aa).

Belongs to the RemA family.

The chain is Putative regulatory protein Sfum_3631 from Syntrophobacter fumaroxidans (strain DSM 10017 / MPOB).